A 131-amino-acid polypeptide reads, in one-letter code: Protein yippee-like PJ691.02 (131 aa).

One can recognise a Yippee domain in the interval 12–109 (RCYVCAKCKT…LEMQDAVLQR (98 aa)). Zn(2+) contacts are provided by Cys16, Cys19, Cys72, and Cys75.

Belongs to the yippee family.

The sequence is that of Protein yippee-like PJ691.02 from Schizosaccharomyces pombe (strain 972 / ATCC 24843) (Fission yeast).